Here is a 159-residue protein sequence, read N- to C-terminus: Putative pre-16S rRNA nuclease (159 aa).

It belongs to the YqgF nuclease family.

The protein resides in the cytoplasm. Its function is as follows. Could be a nuclease involved in processing of the 5'-end of pre-16S rRNA. This Bartonella quintana (strain Toulouse) (Rochalimaea quintana) protein is Putative pre-16S rRNA nuclease.